The sequence spans 1251 residues: Immunoglobulin-like and fibronectin type III domain-containing protein 1 (1251 aa).

Residues 29–119 form the Ig-like 1 domain; that stretch reads PDFEQKPVTS…GEAACSVRLT (91 aa). Residues 61–81 form a disordered region; that stretch reads RWQNSKGDLSDSSKYKISSSP. Residues 188 to 221 adopt a coiled-coil conformation; sequence IVDYRGMLRRLQEMKKEQEDKMAQYINTISSLRH. The Ig-like 2 domain occupies 309 to 398; it reads PRVVVPLAET…SSAWLVVEAG (90 aa). Basic and acidic residues predominate over residues 403-433; it reads LQSTSADHKLQSRRSGKDGRLDIYGERRDAT. A disordered region spans residues 403–454; that stretch reads LQSTSADHKLQSRRSGKDGRLDIYGERRDATRSSTSRYKPGTGSFSKDAQGP. Positions 434 to 449 are enriched in polar residues; that stretch reads RSSTSRYKPGTGSFSK. Residues 454–539 form the Ig-like 3 domain; that stretch reads PMGHFSQGLA…GDQQSEATLT (86 aa). Fibronectin type-III domains lie at 646 to 741, 746 to 845, and 847 to 942; these read PPQG…VAPE, APSA…MRPP, and LVRN…AMPV. An Ig-like 4 domain is found at 946–1030; the sequence is PKFLVDSSTK…LRTLQGKEVA (85 aa). The Fibronectin type-III 4 domain occupies 1043-1137; that stretch reads APGPIHLQEN…TSQPWCIPRQ (95 aa). The Ig-like 5 domain occupies 1151-1245; sequence PDLSQKPRFL…GQAVSTATLI (95 aa).

In terms of assembly, interacts with FLNC. Interacts with KY. Expressed in skeletal muscle.

It localises to the nucleus. Its subcellular location is the cytoplasm. The protein localises to the myofibril. The protein resides in the sarcomere. It is found in the z line. In Homo sapiens (Human), this protein is Immunoglobulin-like and fibronectin type III domain-containing protein 1 (IGFN1).